The following is a 156-amino-acid chain: Small ribosomal subunit protein bS6 (156 aa).

Residues 95-156 (AITETSPLAK…DRDEQSEDSE (62 aa)) are disordered. The span at 117 to 126 (RSGRDRDESG) shows a compositional bias: basic and acidic residues.

The protein belongs to the bacterial ribosomal protein bS6 family.

In terms of biological role, binds together with bS18 to 16S ribosomal RNA. This Nitrosococcus oceani (strain ATCC 19707 / BCRC 17464 / JCM 30415 / NCIMB 11848 / C-107) protein is Small ribosomal subunit protein bS6.